The following is a 213-amino-acid chain: ATP phosphoribosyltransferase (213 aa).

It belongs to the ATP phosphoribosyltransferase family. Short subfamily. As to quaternary structure, heteromultimer composed of HisG and HisZ subunits.

It localises to the cytoplasm. The catalysed reaction is 1-(5-phospho-beta-D-ribosyl)-ATP + diphosphate = 5-phospho-alpha-D-ribose 1-diphosphate + ATP. It functions in the pathway amino-acid biosynthesis; L-histidine biosynthesis; L-histidine from 5-phospho-alpha-D-ribose 1-diphosphate: step 1/9. In terms of biological role, catalyzes the condensation of ATP and 5-phosphoribose 1-diphosphate to form N'-(5'-phosphoribosyl)-ATP (PR-ATP). Has a crucial role in the pathway because the rate of histidine biosynthesis seems to be controlled primarily by regulation of HisG enzymatic activity. This is ATP phosphoribosyltransferase from Bacillus velezensis (strain DSM 23117 / BGSC 10A6 / LMG 26770 / FZB42) (Bacillus amyloliquefaciens subsp. plantarum).